Consider the following 942-residue polypeptide: MRSYSNPENGGQINDNINYSEKRPTMLPENLSLSNYDMDSFLGQFPSDNNMQLPHSTYEQHLQGEQQNPTNPNYFPPEFDENKVDWKQEKPKPDAPSFADNNSFDNVNSSKLTNPSPVQPNIVKSESEPANSKQNEVVEATSVEKAKENVAHESGTPESGGSTSAPKSKKQRLTADQLAYLLREFSKDTNPPPAIREKIGRELNIPERSVTIWFQNRRAKSKLISRRQEEERQRILREQRELDSLNQKVSQAFAHEVLSTSPTSPYVGGIAANRQYANTLLPKPTRKTGNFYMKSGPMQSSMEPCIAESDIPIRQSLSSTYYNSLSPNAVPVSSQRKYSASSYSAIPNAMSVSNQAFDVESPPSSYATPLTGIRMPQPESDLYSYPREVSPSSGGYRMFGHSKPSSYKASGPVRPPNMATGHMRTSSEPTSYDSEFYYFSCTLLVIGLWKRLRASPQDLMCFYSPPKKLFAYLIQFQGIQYRIEYSFFVIESIHVFRVEEPLLNELSATASSRDKPAPNEYWLQMDIQLSVPPVFHMITSEGQGNCTDFTEGNQASEVLLHSLMGRATSMFQMLDRVRRASPELGSVIRLQKGLNPHQFLDPQWANQLPRQPDSSVFDHQGRNPPIQGLSHDTSSEYGNKSQFKRLRSTSTPARQDLAQHLLPPKTNTEGLMHAQSVSPITQAMKSANVLEGSSTRLNSYEPSVSSAYPHHNLALNLDNTQFGELGTSNISYPLSAPSDVGSLPRASNSPSRPVMHPNTQGINTEIKDMAAQFPNSQTGGLTPNSWSMNTNVSVPFTTQNREFGGIGSSSISTTMNAPSQQLSQVPFGDVSLATENSVPSYGFEVPSEESVYAQARTNSSVSAGVAPRLFIQTPSIPLASSAGQDSNLIEKSSSGGVYASQPGASGYLSHDQSGSPFEDVYSPSAGIDFQKLRGQQFSPDMQ.

Polar residues-rich tracts occupy residues 1–19 (MRSY…NINY), 61–73 (HLQG…TNPN), 99–116 (ADNN…TNPS), and 122–135 (IVKS…SKQN). 5 disordered regions span residues 1-54 (MRSY…MQLP), 61-80 (HLQG…PEFD), 87-172 (KQEK…KKQR), 604-651 (WANQ…STST), and 892-922 (SSSG…DVYS). Residues 142–151 (SVEKAKENVA) are compositionally biased toward basic and acidic residues. The segment covering 153 to 164 (ESGTPESGGSTS) has biased composition (low complexity). Positions 164–224 (SAPKSKKQRL…QNRRAKSKLI (61 aa)) form a DNA-binding region, homeobox. Composition is skewed to polar residues over residues 604–614 (WANQLPRQPDS) and 630–641 (SHDTSSEYGNKS).

The protein resides in the nucleus. Trnascription factor that regulates the expression of the homocitrate synthase (HCS) lys4. The chain is Homeobox transcription factor phx1 (phx1) from Schizosaccharomyces pombe (strain 972 / ATCC 24843) (Fission yeast).